Consider the following 454-residue polypeptide: Bifunctional protein GlmU (454 aa).

Residues 1–226 form a pyrophosphorylase region; it reads MALNVVILAA…AIEVEGANNR (226 aa). UDP-N-acetyl-alpha-D-glucosamine contacts are provided by residues 8–11, lysine 22, glutamine 73, 78–79, 100–102, glycine 137, glutamate 151, asparagine 166, and asparagine 224; these read LAAG, GT, and YGD. Aspartate 102 contacts Mg(2+). Residue asparagine 224 coordinates Mg(2+). The linker stretch occupies residues 227–247; it reads VQLAQLERAYQAREAEKLMIA. The N-acetyltransferase stretch occupies residues 248-454; sequence GANLRDPSRI…GWQRPVKIKE (207 aa). The UDP-N-acetyl-alpha-D-glucosamine site is built by arginine 330 and lysine 348. Residue histidine 360 is the Proton acceptor of the active site. 2 residues coordinate UDP-N-acetyl-alpha-D-glucosamine: tyrosine 363 and asparagine 374. Acetyl-CoA contacts are provided by residues alanine 377, 383-384, serine 402, alanine 420, and arginine 437; that span reads NY.

This sequence in the N-terminal section; belongs to the N-acetylglucosamine-1-phosphate uridyltransferase family. The protein in the C-terminal section; belongs to the transferase hexapeptide repeat family. In terms of assembly, homotrimer. Requires Mg(2+) as cofactor.

It localises to the cytoplasm. The enzyme catalyses alpha-D-glucosamine 1-phosphate + acetyl-CoA = N-acetyl-alpha-D-glucosamine 1-phosphate + CoA + H(+). The catalysed reaction is N-acetyl-alpha-D-glucosamine 1-phosphate + UTP + H(+) = UDP-N-acetyl-alpha-D-glucosamine + diphosphate. The protein operates within nucleotide-sugar biosynthesis; UDP-N-acetyl-alpha-D-glucosamine biosynthesis; N-acetyl-alpha-D-glucosamine 1-phosphate from alpha-D-glucosamine 6-phosphate (route II): step 2/2. It participates in nucleotide-sugar biosynthesis; UDP-N-acetyl-alpha-D-glucosamine biosynthesis; UDP-N-acetyl-alpha-D-glucosamine from N-acetyl-alpha-D-glucosamine 1-phosphate: step 1/1. Its pathway is bacterial outer membrane biogenesis; LPS lipid A biosynthesis. Its function is as follows. Catalyzes the last two sequential reactions in the de novo biosynthetic pathway for UDP-N-acetylglucosamine (UDP-GlcNAc). The C-terminal domain catalyzes the transfer of acetyl group from acetyl coenzyme A to glucosamine-1-phosphate (GlcN-1-P) to produce N-acetylglucosamine-1-phosphate (GlcNAc-1-P), which is converted into UDP-GlcNAc by the transfer of uridine 5-monophosphate (from uridine 5-triphosphate), a reaction catalyzed by the N-terminal domain. This Shewanella sp. (strain MR-7) protein is Bifunctional protein GlmU.